The sequence spans 433 residues: Chaperone SurA (433 aa).

An N-terminal signal peptide occupies residues 1–24; that stretch reads MKYRIKALLLASSLIITTITSVQA. 2 PpiC domains span residues 175–276 and 285–384; these read NVEY…KVLD and VEEV…KLED.

Its subcellular location is the periplasm. The enzyme catalyses [protein]-peptidylproline (omega=180) = [protein]-peptidylproline (omega=0). In terms of biological role, chaperone involved in the correct folding and assembly of outer membrane proteins. Recognizes specific patterns of aromatic residues and the orientation of their side chains, which are found more frequently in integral outer membrane proteins. May act in both early periplasmic and late outer membrane-associated steps of protein maturation. The chain is Chaperone SurA from Colwellia psychrerythraea (strain 34H / ATCC BAA-681) (Vibrio psychroerythus).